The primary structure comprises 674 residues: UvrABC system protein C (674 aa).

One can recognise a GIY-YIG domain in the interval 64–142 (NGPGVYRMLN…IKRLRPRFNV (79 aa)). The UVR domain maps to 252-287 (QAVKATIASAMAEASENLDFERAALYRDRLAALSHV).

The protein belongs to the UvrC family. As to quaternary structure, interacts with UvrB in an incision complex.

Its subcellular location is the cytoplasm. In terms of biological role, the UvrABC repair system catalyzes the recognition and processing of DNA lesions. UvrC both incises the 5' and 3' sides of the lesion. The N-terminal half is responsible for the 3' incision and the C-terminal half is responsible for the 5' incision. The chain is UvrABC system protein C from Rhizobium meliloti (strain 1021) (Ensifer meliloti).